A 261-amino-acid chain; its full sequence is Small ribosomal subunit protein eS4 (261 aa).

Positions 42–100 (LPLILILRNRLKYALTYREVVSILMQRHILVDGKIHFCIRLSDVVSIPKTNENFRLLYD) constitute an S4 RNA-binding domain.

The protein belongs to the eukaryotic ribosomal protein eS4 family.

It localises to the cytoplasm. In Prunus armeniaca (Apricot), this protein is Small ribosomal subunit protein eS4 (RPS4).